Consider the following 213-residue polypeptide: Motile sperm domain-containing protein 1 (213 aa).

Positions 16–143 constitute an MSP domain; it reads PVFVFPTELI…KEHLTESLFF (128 aa). The next 2 membrane-spanning stretches (helical) occupy residues 159–179 and 191–211; these read SLLT…PTLG and LSVN…MAIL. The short motif at 205–208 is the Nuclear export signal element; it reads LITM.

Its subcellular location is the endoplasmic reticulum membrane. It localises to the golgi apparatus membrane. In terms of biological role, plays a role in differentiation and/or proliferation of mesenchymal stem cells. Proposed to be involved in epithelial-to-mesenchymal transition (EMT). However, another study suggests that it is not required for EMT or stem cell self-renewal and acts during later stages of differentiation. This is Motile sperm domain-containing protein 1 (MOSPD1) from Homo sapiens (Human).